Here is a 692-residue protein sequence, read N- to C-terminus: SH3 domain-containing protein 21 (692 aa).

The tract at residues 1 to 60 (MVQSELQLQPRAGGRAEAASWGDRGNDKGGFGNPDMPSVSPGPQRPPKLSSLAYDSPPDY) is disordered. Residues 65–126 (SHPEAYRVLF…PDNFVLPPPP (62 aa)) form the SH3 domain. Disordered regions lie at residues 132 to 501 (PRKV…EVLP), 536 to 605 (PKGG…SQET), and 672 to 692 (VMQGTQKSQTPRIIHAQTQTY). Residues 177 to 186 (PSRDSQKLTS) show a composition bias toward basic and acidic residues. Positions 210-220 (TQTPQQRSVSS) are enriched in polar residues. Basic and acidic residues-rich tracts occupy residues 378-396 (VSTRDDTQFHHFSSEEALQ), 490-501 (NEERLLRGEVLP), and 542-582 (SKEE…KEEV). Positions 628-678 (SLRGEVESLRRALELMGVQLERKLTDIWEELKSEKEQRQRLEVQVMQGTQK) form a coiled coil. A compositionally biased stretch (polar residues) spans 673-692 (MQGTQKSQTPRIIHAQTQTY).

This chain is SH3 domain-containing protein 21 (SH3D21), found in Macaca fascicularis (Crab-eating macaque).